Reading from the N-terminus, the 145-residue chain is Large ribosomal subunit protein uL13 (145 aa).

This sequence belongs to the universal ribosomal protein uL13 family. As to quaternary structure, part of the 50S ribosomal subunit.

This protein is one of the early assembly proteins of the 50S ribosomal subunit, although it is not seen to bind rRNA by itself. It is important during the early stages of 50S assembly. The chain is Large ribosomal subunit protein uL13 from Bacillus licheniformis (strain ATCC 14580 / DSM 13 / JCM 2505 / CCUG 7422 / NBRC 12200 / NCIMB 9375 / NCTC 10341 / NRRL NRS-1264 / Gibson 46).